The primary structure comprises 1168 residues: Carbamoyl phosphate synthase arginine-specific large chain, mitochondrial (1168 aa).

Residues 1-51 constitute a mitochondrion transit peptide; that stretch reads MLSTVHKAGRAPALLRHGRRVPVQASQLRALTSGAQNTSIFQTQANAAQRL. The carboxyphosphate synthetic domain stretch occupies residues 86 to 483; the sequence is RDHVDVKKVL…SFQKAIRQVD (398 aa). ATP contacts are provided by residues Arg-213, 243 to 298, Arg-253, Gly-259, Gly-260, Lys-290, Leu-292, Glu-297, Gly-323, Ile-324, His-325, Gln-366, and Glu-380; that span reads ANKI…WKEV. Positions 217 to 409 constitute an ATP-grasp 1 domain; that stretch reads AKALEEINIP…LAYTAAKIGL (193 aa). Mg(2+)-binding residues include Gln-366, Glu-380, and Asn-382. 3 residues coordinate Mn(2+): Gln-366, Glu-380, and Asn-382. Residues 484–628 are oligomerization domain; that stretch reads PRFVGFQGDK…YTTYNASSHD (145 aa). Residues 629–1017 form a carbamoyl phosphate synthetic domain region; that stretch reads VTFEDKGTVI…AYWASLQSAM (389 aa). The ATP-grasp 2 domain occupies 754 to 951; the sequence is SEILDSIGVD…FIDAATKALV (198 aa). ATP-binding positions include 780-837, Arg-790, Lys-829, Ile-831, Glu-836, Gly-861, Val-862, His-863, Ser-864, Gln-904, and Glu-922; that span reads AEEV…AQEI. 3 residues coordinate Mg(2+): Gln-904, Glu-922, and Asn-924. Mn(2+) contacts are provided by Gln-904, Glu-922, and Asn-924. The segment at 1018–1152 is allosteric domain; the sequence is NFRVPEPGEG…AEKLPRPEGI (135 aa). The MGS-like domain maps to 1019 to 1168; sequence FRVPEPGEGL…WSEFIGGKPL (150 aa).

It belongs to the CarB family. As to quaternary structure, heterodimer composed of 2 chains; the small (or glutamine) chain promotes the hydrolysis of glutamine to ammonia, which is used by the large (or ammonia) chain to synthesize carbamoyl phosphate. Mg(2+) serves as cofactor. Requires Mn(2+) as cofactor.

Its subcellular location is the mitochondrion matrix. The catalysed reaction is hydrogencarbonate + L-glutamine + 2 ATP + H2O = carbamoyl phosphate + L-glutamate + 2 ADP + phosphate + 2 H(+). The enzyme catalyses hydrogencarbonate + NH4(+) + 2 ATP = carbamoyl phosphate + 2 ADP + phosphate + 2 H(+). Its pathway is amino-acid biosynthesis; L-arginine biosynthesis; carbamoyl phosphate from bicarbonate: step 1/1. Large subunit of the arginine-specific carbamoyl phosphate synthase (CPSase). CPSase catalyzes the formation of carbamoyl phosphate from the ammonia moiety of glutamine, hydrogencarbonate, and phosphate donated by ATP, the first step of the arginine biosynthetic pathway. The large subunit (synthetase) binds the substrates ammonia (free or transferred from glutamine from the small subunit), hydrogencarbonate and ATP and carries out an ATP-coupled ligase reaction, activating hydrogencarbonate by forming carboxy phosphate which reacts with ammonia to form carbamoyl phosphate. The protein is Carbamoyl phosphate synthase arginine-specific large chain, mitochondrial (arg-3) of Neurospora crassa (strain ATCC 24698 / 74-OR23-1A / CBS 708.71 / DSM 1257 / FGSC 987).